We begin with the raw amino-acid sequence, 33 residues long: Pardaxin P-5 (33 aa).

The protein belongs to the pardaxin family. As to quaternary structure, monomer. In aqueous solution exists as a tetramer.

Its subcellular location is the secreted. The protein resides in the target cell membrane. Functionally, exhibits unusual shark repellent and surfactant properties. Forms voltage-dependent, ion-permeable channels in membranes. At high concentration causes cell membrane lysis. The sequence is that of Pardaxin P-5 from Pardachirus marmoratus (Finless sole).